Here is a 400-residue protein sequence, read N- to C-terminus: Phosphoglycerate kinase (400 aa).

Residues 23 to 25 (DLN), arginine 38, 61 to 64 (HFGR), arginine 120, and arginine 153 each bind substrate. ATP-binding positions include lysine 203, glutamate 325, and 355-358 (GGDT).

The protein belongs to the phosphoglycerate kinase family. Monomer.

The protein resides in the cytoplasm. The catalysed reaction is (2R)-3-phosphoglycerate + ATP = (2R)-3-phospho-glyceroyl phosphate + ADP. The protein operates within carbohydrate degradation; glycolysis; pyruvate from D-glyceraldehyde 3-phosphate: step 2/5. In Agrobacterium fabrum (strain C58 / ATCC 33970) (Agrobacterium tumefaciens (strain C58)), this protein is Phosphoglycerate kinase.